The primary structure comprises 350 residues: Biotin synthase (350 aa).

Residues 38-256 enclose the Radical SAM core domain; sequence NYVQVSTLLS…IAVARIMMPT (219 aa). [4Fe-4S] cluster contacts are provided by Cys-53, Cys-57, and Cys-60. The [2Fe-2S] cluster site is built by Cys-97, Cys-128, Cys-188, and Arg-260.

The protein belongs to the radical SAM superfamily. Biotin synthase family. Homodimer. [4Fe-4S] cluster is required as a cofactor. Requires [2Fe-2S] cluster as cofactor.

The catalysed reaction is (4R,5S)-dethiobiotin + (sulfur carrier)-SH + 2 reduced [2Fe-2S]-[ferredoxin] + 2 S-adenosyl-L-methionine = (sulfur carrier)-H + biotin + 2 5'-deoxyadenosine + 2 L-methionine + 2 oxidized [2Fe-2S]-[ferredoxin]. It functions in the pathway cofactor biosynthesis; biotin biosynthesis; biotin from 7,8-diaminononanoate: step 2/2. Catalyzes the conversion of dethiobiotin (DTB) to biotin by the insertion of a sulfur atom into dethiobiotin via a radical-based mechanism. In Vibrio vulnificus (strain CMCP6), this protein is Biotin synthase.